The chain runs to 322 residues: Fructose-1,6-bisphosphatase class 1 (322 aa).

Positions 84, 103, 105, and 106 each coordinate Mg(2+). Substrate-binding positions include 106 to 109, asparagine 198, and lysine 264; that span reads DGSS. Glutamate 270 is a binding site for Mg(2+).

It belongs to the FBPase class 1 family. In terms of assembly, homotetramer. Mg(2+) is required as a cofactor.

The protein localises to the cytoplasm. The catalysed reaction is beta-D-fructose 1,6-bisphosphate + H2O = beta-D-fructose 6-phosphate + phosphate. It functions in the pathway carbohydrate biosynthesis; gluconeogenesis. This chain is Fructose-1,6-bisphosphatase class 1, found in Saccharophagus degradans (strain 2-40 / ATCC 43961 / DSM 17024).